The sequence spans 218 residues: UPF0173 metal-dependent hydrolase Mpal_1063 (218 aa).

It belongs to the UPF0173 family.

In Methanosphaerula palustris (strain ATCC BAA-1556 / DSM 19958 / E1-9c), this protein is UPF0173 metal-dependent hydrolase Mpal_1063.